Reading from the N-terminus, the 250-residue chain is uncharacterized protein (250 aa).

The 238-residue stretch at 7 to 244 (LKVEDLHVYR…YKKECGKCYK (238 aa)) folds into the ABC transporter domain. 39–46 (GPNGAGKS) is a binding site for ATP.

The protein belongs to the ABC transporter superfamily.

This is an uncharacterized protein from Methanocaldococcus jannaschii (strain ATCC 43067 / DSM 2661 / JAL-1 / JCM 10045 / NBRC 100440) (Methanococcus jannaschii).